The sequence spans 227 residues: AN1-type zinc finger protein 3 (227 aa).

An A20-type zinc finger spans residues 12–44 (PSLPPRCPCGFWGSSKTMNLCSKCFADFQKKQP). 4 residues coordinate Zn(2+): Cys18, Cys20, Cys32, and Cys35. The disordered stretch occupies residues 41-151 (KKQPDDDSTP…RPEESGRSKQ (111 aa)). Low complexity-rich tracts occupy residues 49–59 (TPSTSNSQSDL) and 66–77 (SDNNNTSVTTPT). 2 stretches are compositionally biased toward polar residues: residues 78-94 (LSPSQQSLPTELNVTSP) and 111-127 (ITPTKRSCGADSQSESE). The segment covering 135 to 148 (RLVENPERPEESGR) has biased composition (basic and acidic residues). The segment at 151 to 200 (QKSRRRCFQCQTKLELVQQELGSCRCGYVFCMLHRLPEQHDCTFDHMGRG) adopts an AN1-type zinc-finger fold. Residues Cys157, Cys160, Cys174, Cys176, Cys181, His184, His190, and Cys192 each contribute to the Zn(2+) site.

This chain is AN1-type zinc finger protein 3 (Zfand3), found in Rattus norvegicus (Rat).